Reading from the N-terminus, the 480-residue chain is Protein nucleotidyltransferase YdiU (480 aa).

8 residues coordinate ATP: Gly-86, Gly-88, Arg-89, Lys-109, Asp-121, Gly-122, Arg-172, and Arg-179. Catalysis depends on Asp-248, which acts as the Proton acceptor. 2 residues coordinate Mg(2+): Asn-249 and Asp-258. Residue Asp-258 coordinates ATP.

Belongs to the SELO family. Requires Mg(2+) as cofactor. Mn(2+) is required as a cofactor.

It carries out the reaction L-seryl-[protein] + ATP = 3-O-(5'-adenylyl)-L-seryl-[protein] + diphosphate. It catalyses the reaction L-threonyl-[protein] + ATP = 3-O-(5'-adenylyl)-L-threonyl-[protein] + diphosphate. The catalysed reaction is L-tyrosyl-[protein] + ATP = O-(5'-adenylyl)-L-tyrosyl-[protein] + diphosphate. The enzyme catalyses L-histidyl-[protein] + UTP = N(tele)-(5'-uridylyl)-L-histidyl-[protein] + diphosphate. It carries out the reaction L-seryl-[protein] + UTP = O-(5'-uridylyl)-L-seryl-[protein] + diphosphate. It catalyses the reaction L-tyrosyl-[protein] + UTP = O-(5'-uridylyl)-L-tyrosyl-[protein] + diphosphate. In terms of biological role, nucleotidyltransferase involved in the post-translational modification of proteins. It can catalyze the addition of adenosine monophosphate (AMP) or uridine monophosphate (UMP) to a protein, resulting in modifications known as AMPylation and UMPylation. This is Protein nucleotidyltransferase YdiU from Salmonella paratyphi B (strain ATCC BAA-1250 / SPB7).